A 446-amino-acid polypeptide reads, in one-letter code: DNA repair protein RadA (446 aa).

A C4-type zinc finger spans residues 10 to 27; it reads CSNCGNTSPKWSGQCFDC. 91–98 contacts ATP; the sequence is GDPGIGKS. The RadA KNRFG motif signature appears at 250-254; the sequence is KNRFG. Residues 349-446 form a lon-protease-like region; the sequence is EVYLSIAGGL…HLKDLKEIIR (98 aa).

Belongs to the RecA family. RadA subfamily.

In terms of biological role, DNA-dependent ATPase involved in processing of recombination intermediates, plays a role in repairing DNA breaks. Stimulates the branch migration of RecA-mediated strand transfer reactions, allowing the 3' invading strand to extend heteroduplex DNA faster. Binds ssDNA in the presence of ADP but not other nucleotides, has ATPase activity that is stimulated by ssDNA and various branched DNA structures, but inhibited by SSB. Does not have RecA's homology-searching function. The polypeptide is DNA repair protein RadA (Rickettsia felis (strain ATCC VR-1525 / URRWXCal2) (Rickettsia azadi)).